A 301-amino-acid chain; its full sequence is GTP cyclohydrolase FolE2 (301 aa).

The protein belongs to the GTP cyclohydrolase IV family.

The catalysed reaction is GTP + H2O = 7,8-dihydroneopterin 3'-triphosphate + formate + H(+). Its pathway is cofactor biosynthesis; 7,8-dihydroneopterin triphosphate biosynthesis; 7,8-dihydroneopterin triphosphate from GTP: step 1/1. Functionally, converts GTP to 7,8-dihydroneopterin triphosphate. The sequence is that of GTP cyclohydrolase FolE2 from Exiguobacterium sibiricum (strain DSM 17290 / CCUG 55495 / CIP 109462 / JCM 13490 / 255-15).